Reading from the N-terminus, the 277-residue chain is Glucose-6-phosphatase catalytic subunit 1 (277 aa).

A substrate-binding site is contributed by R4. 2 consecutive transmembrane segments (helical) span residues 39 to 59 and 67 to 87; these read GHAMGAAGVWYVMVTALLSIA and LLYRFLYIGLWMLMGLVELVV. H40 functions as the Proton donor in the catalytic mechanism. Substrate is bound at residue R91. H97 functions as the Nucleophile in the catalytic mechanism. 3 helical membrane-spanning segments follow: residues 131–151, 215–235, and 250–270; these read FLITLFLTSFAVGFYVLLKAL, IGCIVISVSLLHLLDGWTFSP, and AVALLIPTTLVPWALSKIYPV. The Prevents secretion from ER signature appears at 274–277; that stretch reads GKNL.

The protein belongs to the glucose-6-phosphatase family.

It is found in the endoplasmic reticulum membrane. The catalysed reaction is D-glucose 6-phosphate + H2O = D-glucose + phosphate. It functions in the pathway carbohydrate biosynthesis; gluconeogenesis. In terms of biological role, hydrolyzes glucose-6-phosphate to glucose in the endoplasmic reticulum. Forms with the glucose-6-phosphate transporter (SLC37A4/G6PT) the complex responsible for glucose production in the terminal step of glycogenolysis and gluconeogenesis. Hence, it is the key enzyme in homeostatic regulation of blood glucose levels. The protein is Glucose-6-phosphatase catalytic subunit 1 (g6pc1) of Haplochromis xenognathus (Lake Victoria cichlid).